The chain runs to 249 residues: Triosephosphate isomerase (249 aa).

Residues Asn-10 and Lys-12 each coordinate substrate. His-94 functions as the Electrophile in the catalytic mechanism. The Proton acceptor role is filled by Glu-166.

Belongs to the triosephosphate isomerase family. As to quaternary structure, homodimer. The N-terminus is blocked.

It catalyses the reaction D-glyceraldehyde 3-phosphate = dihydroxyacetone phosphate. It participates in carbohydrate biosynthesis; gluconeogenesis. The protein operates within carbohydrate degradation; glycolysis; D-glyceraldehyde 3-phosphate from glycerone phosphate: step 1/1. The sequence is that of Triosephosphate isomerase (TPI1) from Paracoccidioides lutzii (strain ATCC MYA-826 / Pb01) (Paracoccidioides brasiliensis).